A 464-amino-acid polypeptide reads, in one-letter code: UDP-N-acetylmuramate--L-alanine ligase (464 aa).

ATP is bound at residue 123–129; sequence GTHGKTT.

This sequence belongs to the MurCDEF family.

It localises to the cytoplasm. The enzyme catalyses UDP-N-acetyl-alpha-D-muramate + L-alanine + ATP = UDP-N-acetyl-alpha-D-muramoyl-L-alanine + ADP + phosphate + H(+). The protein operates within cell wall biogenesis; peptidoglycan biosynthesis. Functionally, cell wall formation. The protein is UDP-N-acetylmuramate--L-alanine ligase of Carboxydothermus hydrogenoformans (strain ATCC BAA-161 / DSM 6008 / Z-2901).